Reading from the N-terminus, the 1347-residue chain is Protocadherin-11 X-linked (1347 aa).

A signal peptide spans 1 to 23 (MDLLSGTYIFAVLLACVVFHSGA). Topologically, residues 24-812 (QEKNYTIREE…VSSPTNDYVK (789 aa)) are extracellular. Cadherin domains are found at residues 26–139 (KNYT…APLF), 140–249 (PATV…HPVF), 250–355 (KETE…VPSI), 362–466 (NPVN…APVF), 467–570 (TQSF…SPVF), 571–673 (THNE…KPVF), and 677–795 (PSNY…APVT). Residues Asn27, Asn48, and Asn54 are each glycosylated (N-linked (GlcNAc...) asparagine). Asn344 is a glycosylation site (N-linked (GlcNAc...) asparagine). N-linked (GlcNAc...) asparagine glycosylation occurs at Asn553. Asn773 is a glycosylation site (N-linked (GlcNAc...) asparagine). A helical transmembrane segment spans residues 813–833 (ILVAAVAGTITVVVVIFITAV). Residues 834–1347 (VRCRQAPHLK…DSPIMEEHPL (514 aa)) are Cytoplasmic-facing. 3 disordered regions span residues 1057 to 1091 (LPEG…GYPQ), 1097 to 1116 (RATP…ESTF), and 1326 to 1347 (FTPR…EHPL).

Its subcellular location is the cell membrane. Functionally, potential calcium-dependent cell-adhesion protein. This is Protocadherin-11 X-linked (PCDH11X) from Gorilla gorilla gorilla (Western lowland gorilla).